The following is a 326-amino-acid chain: DNA-directed RNA polymerase subunit alpha (326 aa).

Residues 1-231 (MQTALLKPKI…DQLSVFAALE (231 aa)) form an alpha N-terminal domain (alpha-NTD) region. The tract at residues 247–326 (IDPILLRPVD…ENWPPAGLEK (80 aa)) is alpha C-terminal domain (alpha-CTD).

The protein belongs to the RNA polymerase alpha chain family. In terms of assembly, homodimer. The RNAP catalytic core consists of 2 alpha, 1 beta, 1 beta' and 1 omega subunit. When a sigma factor is associated with the core the holoenzyme is formed, which can initiate transcription.

The enzyme catalyses RNA(n) + a ribonucleoside 5'-triphosphate = RNA(n+1) + diphosphate. In terms of biological role, DNA-dependent RNA polymerase catalyzes the transcription of DNA into RNA using the four ribonucleoside triphosphates as substrates. The protein is DNA-directed RNA polymerase subunit alpha of Cupriavidus necator (strain ATCC 17699 / DSM 428 / KCTC 22496 / NCIMB 10442 / H16 / Stanier 337) (Ralstonia eutropha).